The primary structure comprises 599 residues: Dachshund homolog 2 (599 aa).

The interval 69-155 (RMVDMHGMKV…LITRKDFETL (87 aa)) is DACHbox-N. Disordered regions lie at residues 166–186 (RQMTRKQAVNSSRPGRPPKRS), 237–280 (LQGN…GPQH), and 370–409 (RIPESPSPAPSLEENHRPGSQTSSHTSSSVSSSPSQMDHH). Over residues 237–262 (LQGNGSQNGTESEPDDLNSNTGGSES) the composition is skewed to polar residues. Low complexity predominate over residues 389 to 405 (SQTSSHTSSSVSSSPSQ). Residues 453–533 (SSVETLLTNI…KTKRKLQEAL (81 aa)) are DACHbox-C. The stretch at 459–554 (LTNIQGLLKV…QALKQATTSD (96 aa)) forms a coiled coil.

Belongs to the DACH/dachshund family. In terms of assembly, interacts with SIX6 and EYA2.

It localises to the nucleus. Transcription factor that is involved in regulation of organogenesis. Seems to be a regulator for SIX1 and SIX6. Seems to act as a corepressor of SIX6 in regulating proliferation by directly repressing cyclin-dependent kinase inhibitors, including the p27Kip1 promoter. Is recruited with SIX6 to the p27Kip1 promoter in embryonal retina. SIX6 corepression also seems to involve NCOR1, TBL1, HDAC1 and HDAC3. May be involved together with PAX3, SIX1, and EYA2 in regulation of myogenesis. In the developing somite, expression of DACH2 and PAX3 is regulated by the overlying ectoderm, and DACH2 and PAX3 positively regulate each other's expression. Probably binds to DNA via its DACHbox-N domain. The sequence is that of Dachshund homolog 2 (DACH2) from Homo sapiens (Human).